Consider the following 892-residue polypeptide: Nitrogen assimilation transcription factor nirA (892 aa).

The tract at residues 1 to 32 (MGEKLDPELSSDGPHTKSSSKGQGTSTDNAPA) is disordered. The span at 16-27 (TKSSSKGQGTST) shows a compositional bias: low complexity. Residues 42–70 (CIACRRRKSKCDGNLPSCAACSSVYHTTC) constitute a DNA-binding region (zn(2)-C6 fungal-type). Disordered regions lie at residues 646 to 714 (GPWD…SGPV), 731 to 761 (AHNE…SAQE), and 842 to 892 (PNIP…SFQR). Low complexity predominate over residues 649 to 674 (DQAASPSTTSDSPPSVSSQSVVATTD). Polar residues-rich tracts occupy residues 675–714 (LSQP…SGPV), 746–761 (VSTS…SAQE), and 876–892 (NVNS…SFQR).

The protein resides in the nucleus. Pathway-specific regulatory gene of nitrate assimilation; it activates the transcription of the genes for nitrate and nitrite reductases (niaD and niiA). The sequence is that of Nitrogen assimilation transcription factor nirA (nirA) from Emericella nidulans (strain FGSC A4 / ATCC 38163 / CBS 112.46 / NRRL 194 / M139) (Aspergillus nidulans).